The sequence spans 155 residues: Ribosome maturation factor RimP (155 aa).

The protein belongs to the RimP family.

It localises to the cytoplasm. Functionally, required for maturation of 30S ribosomal subunits. The chain is Ribosome maturation factor RimP from Dichelobacter nodosus (strain VCS1703A).